The following is a 232-amino-acid chain: Large ribosomal subunit protein uL1 (232 aa).

The protein belongs to the universal ribosomal protein uL1 family. In terms of assembly, part of the 50S ribosomal subunit.

Functionally, binds directly to 23S rRNA. The L1 stalk is quite mobile in the ribosome, and is involved in E site tRNA release. Its function is as follows. Protein L1 is also a translational repressor protein, it controls the translation of the L11 operon by binding to its mRNA. The sequence is that of Large ribosomal subunit protein uL1 from Chlamydia abortus (strain DSM 27085 / S26/3) (Chlamydophila abortus).